Here is a 201-residue protein sequence, read N- to C-terminus: 3-isopropylmalate dehydratase small subunit (201 aa).

The protein belongs to the LeuD family. LeuD type 1 subfamily. Heterodimer of LeuC and LeuD.

It catalyses the reaction (2R,3S)-3-isopropylmalate = (2S)-2-isopropylmalate. It participates in amino-acid biosynthesis; L-leucine biosynthesis; L-leucine from 3-methyl-2-oxobutanoate: step 2/4. Its function is as follows. Catalyzes the isomerization between 2-isopropylmalate and 3-isopropylmalate, via the formation of 2-isopropylmaleate. The sequence is that of 3-isopropylmalate dehydratase small subunit from Shewanella halifaxensis (strain HAW-EB4).